Reading from the N-terminus, the 74-residue chain is ATP synthase subunit c (74 aa).

The next 2 helical transmembrane spans lie at 5 to 25 and 49 to 69; these read LAHI…IGVG and LFIG…VALL.

Belongs to the ATPase C chain family. F-type ATPases have 2 components, F(1) - the catalytic core - and F(0) - the membrane proton channel. F(1) has five subunits: alpha(3), beta(3), gamma(1), delta(1), epsilon(1). F(0) has four main subunits: a(1), b(1), b'(1) and c(10-14). The alpha and beta chains form an alternating ring which encloses part of the gamma chain. F(1) is attached to F(0) by a central stalk formed by the gamma and epsilon chains, while a peripheral stalk is formed by the delta, b and b' chains.

The protein localises to the cell inner membrane. In terms of biological role, f(1)F(0) ATP synthase produces ATP from ADP in the presence of a proton or sodium gradient. F-type ATPases consist of two structural domains, F(1) containing the extramembraneous catalytic core and F(0) containing the membrane proton channel, linked together by a central stalk and a peripheral stalk. During catalysis, ATP synthesis in the catalytic domain of F(1) is coupled via a rotary mechanism of the central stalk subunits to proton translocation. Key component of the F(0) channel; it plays a direct role in translocation across the membrane. A homomeric c-ring of between 10-14 subunits forms the central stalk rotor element with the F(1) delta and epsilon subunits. The polypeptide is ATP synthase subunit c (Roseobacter denitrificans (strain ATCC 33942 / OCh 114) (Erythrobacter sp. (strain OCh 114))).